Here is a 627-residue protein sequence, read N- to C-terminus: MELGGPGAPRLLPPLLLLLGTGLLRASSHVETRAHAEERLLKKLFSGYNKWSRPVANISDVVLVRFGLSIAQLIDVDEKNQMMTTNVWVKQEWHDYKLRWDPADYENVTSIRIPSELIWRPDIVLYNNADGDFAVTHLTKAHLFHDGRVQWTPPAIYKSSCSIDVTFFPFDQQNCTMKFGSWTYDKAKIDLVNMHSRVDQLDFWESGEWVIVDAVGTYNTRKYECCAEIYPDITYAFVIRRLPLFYTINLIIPCLLISCLTVLVFYLPSECGEKITLCISVLLSLTVFLLLITEIIPSTSLVIPLIGEYLLFTMIFVTLSIVITVFVLNVHHRSPRTHTMPTWVRRVFLDIVPRLLLMKRPSVVKDNCRRLIESMHKMASAPRFWPEPEGEPPATSGTQSLHPPSPSFCVPLDVPAEPGPSCKSPSDQLPPQQPLEAEKASPHPSPGPCRPPHGTQAPGLAKARSLSVQHMSSPGEAVEGGVRCRSRSIQYCVPRDDAAPEADGQAAGALASRNTHSAELPPPDQPSPCKCTCKKEPSSVSPSATVKTRSTKAPPPHLPLSPALTRAVEGVQYIADHLKAEDTDFSVKEDWKYVAMVIDRIFLWMFIIVCLLGTVGLFLPPWLAGMI.

A signal peptide spans 1–26; the sequence is MELGGPGAPRLLPPLLLLLGTGLLRA. Topologically, residues 27–249 are extracellular; sequence SSHVETRAHA…RRLPLFYTIN (223 aa). N-linked (GlcNAc...) asparagine glycosylation is present at asparagine 57. The Ca(2+) site is built by valine 76 and glutamate 78. 2 N-linked (GlcNAc...) asparagine glycosylation sites follow: asparagine 107 and asparagine 174. Cystine bridges form between cysteine 161–cysteine 175 and cysteine 225–cysteine 226. A helical transmembrane segment spans residues 250–269; the sequence is LIIPCLLISCLTVLVFYLPS. Cysteine 271 carries S-palmitoyl cysteine lipidation. Helical transmembrane passes span 275–291 and 306–330; these read ITLC…FLLL and IGEY…VLNV. At 331–600 the chain is on the cytoplasmic side; it reads HHRSPRTHTM…WKYVAMVIDR (270 aa). Disordered regions lie at residues 382–481 and 496–561; these read PRFW…VEGG and DDAA…LPLS. At serine 424 the chain carries Phosphoserine. A compositionally biased stretch (low complexity) spans 501–511; the sequence is EADGQAAGALA. 2 positions are modified to phosphoserine: serine 538 and serine 541. Polar residues predominate over residues 538 to 548; sequence SSVSPSATVKT. Residues 601-619 traverse the membrane as a helical segment; that stretch reads IFLWMFIIVCLLGTVGLFL.

This sequence belongs to the ligand-gated ion channel (TC 1.A.9) family. Acetylcholine receptor (TC 1.A.9.1) subfamily. Alpha-4/CHRNA4 sub-subfamily. In terms of assembly, neuronal AChR is composed of two different types of subunits: alpha and beta. CHRNA4 forms heteropentameric neuronal acetylcholine receptors with CHRNB2 and CHRNB4, as well as CHRNA5 and CHRNB3 as accesory subunits. Found in two major stoichiometric forms, LS (low agonist sensitivity): (CHRNA4)3:(CHRNB2)2 and HS (high agonist sensitivity): (CHRNA4)2:(CHRNB2)3, the two stoichiometric forms differ in their unitary conductance, calcium permeability, ACh sensitivity and potentiation by divalent cation. Cells produce predominantly an (CHRNA4)3:(CHRNB2)2 nAChR. The (CHRNA4)2:(CHRNB2)3 expression is selectively up-regulated by nicotine and has lower single channel conductance and calcium permeability. In the striatum, also forms CHRNA4:CHRNA6:CHRNB2 complexes. Also found in the stoichiometric form: (CHRNA4:CHRNB2)2:CHRNB3. Interacts with RIC3; which is required for proper folding and assembly. Interacts with LYPD6.

It localises to the synaptic cell membrane. The protein localises to the cell membrane. It carries out the reaction Ca(2+)(in) = Ca(2+)(out). The catalysed reaction is K(+)(in) = K(+)(out). It catalyses the reaction Na(+)(in) = Na(+)(out). With respect to regulation, activated by a myriad of ligands such as acetylcholine, cytisine, nicotine, choline and epibatidine. Channel potentiation by calcium is stoichiometry-selective, CHRNA4:CHRNB2 nACh receptor is achieved by calcium association with topographically distinct sites framed by anionic residues within the CHRNA4 subunit and between the CHRNA4 and CHRNB2 subunits. nAChR activity is inhibited by the antagonist alpha-conotoxins BuIA, PnIA, GID and MII, small disulfide-constrained peptides from cone snails. Component of neuronal acetylcholine receptors (nAChRs) that function as pentameric, ligand-gated cation channels with high calcium permeability among other activities. nAChRs are excitatory neurotrasnmitter receptors formed by a collection of nAChR subunits known to mediate synaptic transmission in the nervous system and the neuromuscular junction. Each nAchR subunit confers differential attributes to channel properties, including activation, deactivation and desensitization kinetics, pH sensitivity, cation permeability, and binding to allosteric modulators. CHRNA4 forms heteropentameric neuronal acetylcholine receptors with CHRNB2 and CHRNB4, as well as CHRNA5 and CHRNB3 as accesory subunits. Is the most abundant nAChR subtype expressed in the central nervous system. Found in two major stoichiometric forms,(CHRNA4)3:(CHRNB2)2 and (CHRNA4)2:(CHRNB2)3, the two stoichiometric forms differ in their unitary conductance, calcium permeability, ACh sensitivity and potentiation by divalent cation. Involved in the modulation of calcium-dependent signaling pathways, influences the release of neurotransmitters, including dopamine, glutamate and GABA. This Homo sapiens (Human) protein is Neuronal acetylcholine receptor subunit alpha-4.